The primary structure comprises 847 residues: Follistatin-related protein 5 (847 aa).

Positions 1–20 are cleaved as a signal peptide; that stretch reads MFRCWSAILILGFIFLASEG. In terms of domain architecture, Kazal-like spans 81 to 135; it reads ETRHAECACMDLCKQHYKPVCGSDGEFYENHCEVHRAACLKKQKITIVHNEDCFF. Disulfide bonds link cysteine 87–cysteine 119, cysteine 93–cysteine 112, and cysteine 101–cysteine 133. EF-hand domains follow at residues 175–210 and 211–246; these read RKKPLVDQMFKYFDADSNGLVDINELTQVIKQEELN and KDLSDCTLYDLLKYDDFNADKHLALEEFYRAFQVIQ. Residues aspartate 188, aspartate 190, asparagine 192, glutamate 199, aspartate 226, asparagine 228, aspartate 230, histidine 232, and glutamate 237 each contribute to the Ca(2+) site. Ig-like domains are found at residues 250-338 and 341-426; these read PEDQ…FQVN and PVIR…EDIS. 2 disulfides stabilise this stretch: cysteine 270–cysteine 321 and cysteine 362–cysteine 413. 2 N-linked (GlcNAc...) asparagine glycosylation sites follow: asparagine 318 and asparagine 394.

Its subcellular location is the secreted. The protein is Follistatin-related protein 5 (Fstl5) of Mus musculus (Mouse).